The primary structure comprises 273 residues: (5R)-carbapenem-3-carboxylate synthase (273 aa).

His101 and Asp103 together coordinate Fe cation. Residue Gly104 coordinates substrate. 2-oxoglutarate is bound at residue Thr130. His251 is a Fe cation binding site. 2-oxoglutarate contacts are provided by Arg253, Arg263, and Arg267.

The protein belongs to the TfdA dioxygenase family. In terms of assembly, homohexamer. Dimer of trimers. Requires Fe(2+) as cofactor.

It is found in the cytoplasm. The catalysed reaction is (3S,5S)-carbapenam-3-caboxylate + 2-oxoglutarate + O2 = (5R)-carbapenem-3-carboxylate + succinate + CO2 + H2O. Its activity is regulated as follows. Inhibited by L-N-acetylproline and by D-N-acetylproline. Functionally, catalyzes the Fe(2+) and alpha-ketoglutarate-dependent conversion of (3S,5S)-carbapenam to (5R)-carbapenem, an essential step in carbapenem antibiotic biosynthesis. This chain is (5R)-carbapenem-3-carboxylate synthase (carC), found in Pectobacterium carotovorum subsp. carotovorum (Erwinia carotovora subsp. carotovora).